The sequence spans 494 residues: 5'-3' exonuclease PLD3 (494 aa).

Topologically, residues 1–37 are cytoplasmic; sequence MNPKVEYKQIQSHDEAENQVLQHECHQAKARKYYRCA. The chain crosses the membrane as a helical; Signal-anchor for type II membrane protein span at residues 38–58; the sequence is VVIAIIITLLFCVLASQLLLF. Residues 59-494 are Lumenal-facing; it reads PLFSITSQTT…LSSWKEKCIF (436 aa). Asparagine 100 is a glycosylation site (N-linked (GlcNAc...) asparagine). Positions 198–225 constitute a PLD phosphodiesterase 1 domain; that stretch reads TDGVLHTKFWVVDSEHFYIGSANMDWRS. Residues histidine 203, lysine 205, and aspartate 210 contribute to the active site. Asparagine 238, asparagine 260, asparagine 270, asparagine 286, and asparagine 389 each carry an N-linked (GlcNAc...) asparagine glycan. Residues 413–439 form the PLD phosphodiesterase 2 domain; it reads YARVNHNKYMVTDRVAYIGTSNWSGDY. Active-site residues include histidine 418, lysine 420, and aspartate 425. N-linked (GlcNAc...) asparagine glycosylation is found at asparagine 434, asparagine 451, and asparagine 477.

It belongs to the phospholipase D family. In terms of processing, N-glycosylated. Proteolytically processed to a soluble form that is stable within endosomes and lysosomes. During transport through the secretory pathway becomes proteolysed by cysteine proteases, thereby releasing a stable soluble lysosomal lumenal polypeptide, whereas the transmembrane-bound fragment is rapidly degraded. Its transport route to lysosomes involves ubiquitination and the ESCRT complex. Post-translationally, ubiquitinated. Ubiquitination mediates sorting into lysosomes.

It is found in the endoplasmic reticulum membrane. The protein resides in the lysosome lumen. Its subcellular location is the early endosome membrane. The protein localises to the late endosome membrane. It localises to the golgi apparatus membrane. It is found in the endosome membrane. It catalyses the reaction Exonucleolytic cleavage in the 5'- to 3'-direction to yield nucleoside 3'-phosphates.. 5'-&gt;3' DNA exonuclease which digests single-stranded DNA (ssDNA). Regulates inflammatory cytokine responses via the degradation of nucleic acids, by reducing the concentration of ssDNA able to stimulate TLR9, a nucleotide-sensing receptor in collaboration with PLD4. May be important in myotube formation. Plays a role in lysosomal homeostasis. Involved in the regulation of endosomal protein sorting. The sequence is that of 5'-3' exonuclease PLD3 (pld3) from Xenopus tropicalis (Western clawed frog).